Here is a 469-residue protein sequence, read N- to C-terminus: Argininosuccinate lyase (469 aa).

Belongs to the lyase 1 family. Argininosuccinate lyase subfamily.

The protein localises to the cytoplasm. The enzyme catalyses 2-(N(omega)-L-arginino)succinate = fumarate + L-arginine. Its pathway is amino-acid biosynthesis; L-arginine biosynthesis; L-arginine from L-ornithine and carbamoyl phosphate: step 3/3. In Mycolicibacterium smegmatis (strain ATCC 700084 / mc(2)155) (Mycobacterium smegmatis), this protein is Argininosuccinate lyase.